The sequence spans 1149 residues: Translocase of chloroplast 126, chloroplastic (1149 aa).

Disordered stretches follow at residues 1 to 206 (MDAL…GKEL), 219 to 292 (NMPN…RELT), and 315 to 431 (LELK…VNPS). Residues 131–142 (LYYDDYGDDGEV) are compositionally biased toward acidic residues. Over residues 152-168 (TSSSSSSSSSECSSSAS) the composition is skewed to low complexity. Composition is skewed to acidic residues over residues 271–280 (YDQEGEDADS) and 335–357 (GESD…DEHE). The span at 406-429 (TAATDTQSSNAASSTQVAGTTDVN) shows a compositional bias: polar residues. The AIG1-type G domain maps to 514–743 (DFACTILVLG…KLQDTAAPGR (230 aa)). The G1 stretch occupies residues 523–530 (GKTGVGKS). A GTP-binding site is contributed by 526–531 (GVGKSA). Serine 530 is a binding site for Mg(2+). A G2 region spans residues 550–554 (STTNV). The segment at 570-573 (DTPG) is G3. The tract at residues 642-645 (THAS) is G4. Residues histidine 643 and 691-692 (EN) each bind GTP. The G5 stretch occupies residues 691 to 693 (ENH). Disordered regions lie at residues 769–800 (KLPD…LPPF) and 833–869 (KQHR…DEAG). Acidic residues predominate over residues 773–796 (EQLDESDESDDDEEDEEEGDEYDD). Basic and acidic residues-rich tracts occupy residues 833–842 (KQHREQLQRR) and 852–862 (MRKEGLSHPAD). Residues 1123–1144 (MVLIGIVPILRSLINCRFGFGG) form a helical membrane-spanning segment.

This sequence belongs to the TRAFAC class TrmE-Era-EngA-EngB-Septin-like GTPase superfamily. AIG1/Toc34/Toc159-like paraseptin GTPase family. TOC159 subfamily. Part of the TOC core complex. The cofactor is Mg(2+).

It is found in the plastid. The protein localises to the chloroplast outer membrane. In terms of biological role, GTPase involved in protein precursor import into chloroplasts. Seems to recognize chloroplast-destined precursor proteins and regulate their presentation to the translocation channel through GTP hydrolysis. Probably specialized in the import of nuclear encoded non-photosynthetic preproteins from the cytoplasm to the chloroplast. The polypeptide is Translocase of chloroplast 126, chloroplastic (Physcomitrium patens (Spreading-leaved earth moss)).